Reading from the N-terminus, the 134-residue chain is Phosphoribosyl-AMP cyclohydrolase (134 aa).

Aspartate 80 is a binding site for Mg(2+). Cysteine 81 provides a ligand contact to Zn(2+). Residues aspartate 82 and aspartate 84 each contribute to the Mg(2+) site. 2 residues coordinate Zn(2+): cysteine 98 and cysteine 105.

The protein belongs to the PRA-CH family. As to quaternary structure, homodimer. The cofactor is Mg(2+). Zn(2+) is required as a cofactor.

The protein localises to the cytoplasm. The enzyme catalyses 1-(5-phospho-beta-D-ribosyl)-5'-AMP + H2O = 1-(5-phospho-beta-D-ribosyl)-5-[(5-phospho-beta-D-ribosylamino)methylideneamino]imidazole-4-carboxamide. Its pathway is amino-acid biosynthesis; L-histidine biosynthesis; L-histidine from 5-phospho-alpha-D-ribose 1-diphosphate: step 3/9. Functionally, catalyzes the hydrolysis of the adenine ring of phosphoribosyl-AMP. This Herminiimonas arsenicoxydans protein is Phosphoribosyl-AMP cyclohydrolase.